Reading from the N-terminus, the 354-residue chain is MAPQTCAICQKAKAMVKRPKTGEQICRECFFYVFETEVHNTITQANLFKPGDRVAIGASGGKDSTVLAYVMKMLNERYQYGLELFLLSIDEGITGYRDDSLETVKRNQQQYDMPLKILSYDELYGWTMDAIVSQVGRKNNCTFCGVFRRQALDRGAAMLNVDHIVTGHNADDIAETVLMNIMRGDIARLGRCTSICTQGEDTIRRSKPFKYAYEKEIVMYAYFKKLDYFSTECIYSPDAYRGHARVFLKDLEAARPSAIIDIIHSGEAFEVREEVKATQRVQQVCQRCGYMSSNALCKACTLLEGLERGMANSGITDRARKKLDAEGPAPDNLRTIPFFKPPSGGPLIAIESVS.

The protein belongs to the TtcA family. CTU1/NCS6/ATPBD3 subfamily.

It is found in the cytoplasm. The protein operates within tRNA modification; 5-methoxycarbonylmethyl-2-thiouridine-tRNA biosynthesis. Functionally, plays a central role in 2-thiolation of mcm(5)S(2)U at tRNA wobble positions of tRNA(Lys), tRNA(Glu) and tRNA(Gln). Directly binds tRNAs and probably acts by catalyzing adenylation of tRNAs, an intermediate required for 2-thiolation. It is unclear whether it acts as a sulfurtransferase that transfers sulfur from thiocarboxylated URM1 onto the uridine of tRNAs at wobble position. Prior mcm(5) tRNA modification by the elongator complex is required for 2-thiolation. May also be involved in protein urmylation. This Laccaria bicolor (strain S238N-H82 / ATCC MYA-4686) (Bicoloured deceiver) protein is Cytoplasmic tRNA 2-thiolation protein 1.